A 274-amino-acid chain; its full sequence is NADPH-dependent 7-cyano-7-deazaguanine reductase (274 aa).

Residue 80–82 (VES) coordinates substrate. Position 82-83 (82-83 (SK)) interacts with NADPH. The active-site Thioimide intermediate is the cysteine 181. Catalysis depends on aspartate 188, which acts as the Proton donor. 220-221 (HE) lines the substrate pocket. Residue 249-250 (RG) participates in NADPH binding.

Belongs to the GTP cyclohydrolase I family. QueF type 2 subfamily. In terms of assembly, homodimer.

The protein localises to the cytoplasm. The catalysed reaction is 7-aminomethyl-7-carbaguanine + 2 NADP(+) = 7-cyano-7-deazaguanine + 2 NADPH + 3 H(+). It functions in the pathway tRNA modification; tRNA-queuosine biosynthesis. Catalyzes the NADPH-dependent reduction of 7-cyano-7-deazaguanine (preQ0) to 7-aminomethyl-7-deazaguanine (preQ1). This chain is NADPH-dependent 7-cyano-7-deazaguanine reductase, found in Paraburkholderia xenovorans (strain LB400).